The chain runs to 146 residues: Probable cyclic pyranopterin monophosphate synthase (146 aa).

Substrate is bound by residues 66 to 68 (LTH) and 102 to 103 (ME). The active site involves Asp117.

It belongs to the MoaC family. Homohexamer; trimer of dimers.

The catalysed reaction is (8S)-3',8-cyclo-7,8-dihydroguanosine 5'-triphosphate = cyclic pyranopterin phosphate + diphosphate. The protein operates within cofactor biosynthesis; molybdopterin biosynthesis. Catalyzes the conversion of (8S)-3',8-cyclo-7,8-dihydroguanosine 5'-triphosphate to cyclic pyranopterin monophosphate (cPMP). The protein is Probable cyclic pyranopterin monophosphate synthase of Aeropyrum pernix (strain ATCC 700893 / DSM 11879 / JCM 9820 / NBRC 100138 / K1).